The chain runs to 330 residues: MSATPIIHLRDVKKRTGVLNAWERVRNKPQVHWAMECFAEALGVFFYVYFGLGSTAAWVIGNILKQSGLSSVFQIGFAYAFGILFAIGVCAATSGGHFNPCVTIAFTIFRGFPPLKAVRYIVAQILGAYIASALVYNQWKVLIVESELLLKQAGVYETTMFTPNGPAGIFALYLLPGAQTLPRAFLNEFVNCFVLALVIWAALDPTSFMIPPVMAPFIIAAAYAGSIWGYAVPAISLNSARDIGCRLFALTIWGKSAAGGSYSAIAALVNIPATLLAAVVYELFLVDSDRVVAGSHLEFMNVAANHRRHRQQAEDDNLVEADDSSQEKPV.

The Cytoplasmic portion of the chain corresponds to 1 to 40 (MSATPIIHLRDVKKRTGVLNAWERVRNKPQVHWAMECFAE). Residues 41–61 (ALGVFFYVYFGLGSTAAWVIG) traverse the membrane as a helical segment. Over 62-71 (NILKQSGLSS) the chain is Extracellular. Residues 72–92 (VFQIGFAYAFGILFAIGVCAA) traverse the membrane as a helical segment. Residues 93–124 (TSGGHFNPCVTIAFTIFRGFPPLKAVRYIVAQ) are Cytoplasmic-facing. The NPA 1 motif lies at 99–101 (NPC). A helical transmembrane segment spans residues 125–145 (ILGAYIASALVYNQWKVLIVE). The Extracellular segment spans residues 146–157 (SELLLKQAGVYE). A helical membrane pass occupies residues 158–178 (TTMFTPNGPAGIFALYLLPGA). At 179–183 (QTLPR) the chain is on the cytoplasmic side. Residues 184-204 (AFLNEFVNCFVLALVIWAALD) traverse the membrane as a helical segment. Residues 205–207 (PTS) are Extracellular-facing. The chain crosses the membrane as a helical span at residues 208 to 228 (FMIPPVMAPFIIAAAYAGSIW). Residues 229-264 (GYAVPAISLNSARDIGCRLFALTIWGKSAAGGSYSA) lie on the Cytoplasmic side of the membrane. The NPA 2 signature appears at 238 to 240 (NSA). A helical transmembrane segment spans residues 265-285 (IAALVNIPATLLAAVVYELFL). Residues 286–330 (VDSDRVVAGSHLEFMNVAANHRRHRQQAEDDNLVEADDSSQEKPV) lie on the Extracellular side of the membrane. Positions 308 to 330 (RHRQQAEDDNLVEADDSSQEKPV) are disordered. A compositionally biased stretch (acidic residues) spans 314–324 (EDDNLVEADDS).

The protein belongs to the MIP/aquaporin (TC 1.A.8) family.

The protein localises to the cell membrane. It catalyses the reaction H2O(in) = H2O(out). The enzyme catalyses CO2(out) = CO2(in). In terms of biological role, water channel required to facilitate the transport of water across membranes. Also mediates the transport of carbon dioxide across the membrane. This chain is Aquaporin-3, found in Laccaria bicolor (Bicoloured deceiver).